Consider the following 669-residue polypeptide: GTP-binding protein 1 (669 aa).

A disordered region spans residues 1 to 32 (MAAERSRSPVDSPVPASMFAPEPSSPGAARAA). Residues Ser6, Ser8, Ser12, Ser24, Ser25, Ser44, Ser47, and Ser69 each carry the phosphoserine modification. The region spanning 158–389 (FLEVRVAVVG…LNLLSPRTSY (232 aa)) is the tr-type G domain. A G1 region spans residues 167–174 (GNVDAGKS). Position 167 to 174 (167 to 174 (GNVDAGKS)) interacts with GTP. Residues 206–210 (GRTSS) form a G2 region. The interval 252-255 (DLAG) is G3. Residues 252-256 (DLAGH) and 308-311 (TKID) contribute to the GTP site. Positions 308-311 (TKID) are G4. The G5 stretch occupies residues 366 to 368 (SNV). Composition is skewed to polar residues over residues 573 to 595 (LLQT…QSTK) and 620 to 637 (DEAS…SGLQ). Positions 573–669 (LLQTTNNSPM…GACVTPASGC (97 aa)) are disordered. Ser580 is subject to Phosphoserine. Positions 646-657 (GRRRGGQRHKVK) are enriched in basic residues.

It belongs to the TRAFAC class translation factor GTPase superfamily. Classic translation factor GTPase family. GTPBP1 subfamily. As to quaternary structure, interacts with EXOSC2/RRP4, EXOSC3/RRP40, EXOSC5/RRP46, HNRNPD, HNRNPR and SYNCRIP. Identified in a complex with HNRNPD, HNRNPL, HNRNPQ, HNRNPR, HNRNPU and AANAT mRNA, but does not bind mRNA by itself. In terms of tissue distribution, detected in pineal gland (at protein level).

The protein localises to the cytoplasm. Its function is as follows. Promotes degradation of target mRNA species. Plays a role in the regulation of circadian mRNA stability. Binds GTP and has GTPase activity. This is GTP-binding protein 1 (Gtpbp1) from Rattus norvegicus (Rat).